The sequence spans 156 residues: uncharacterized protein (156 aa).

The next 5 membrane-spanning stretches (helical) occupy residues 6–26 (LIVL…PYFA), 34–54 (FWKF…HQMP), 68–88 (CARC…YPFI), 100–120 (WYLI…LIGL), and 129–149 (FITG…IFFE).

Its subcellular location is the cell membrane. This is an uncharacterized protein from Methanocaldococcus jannaschii (strain ATCC 43067 / DSM 2661 / JAL-1 / JCM 10045 / NBRC 100440) (Methanococcus jannaschii).